Consider the following 330-residue polypeptide: N-acetyl-gamma-glutamyl-phosphate reductase (330 aa).

Cys143 is a catalytic residue.

It belongs to the NAGSA dehydrogenase family. Type 1 subfamily.

The protein localises to the cytoplasm. The catalysed reaction is N-acetyl-L-glutamate 5-semialdehyde + phosphate + NADP(+) = N-acetyl-L-glutamyl 5-phosphate + NADPH + H(+). Its pathway is amino-acid biosynthesis; L-arginine biosynthesis; N(2)-acetyl-L-ornithine from L-glutamate: step 3/4. In terms of biological role, catalyzes the NADPH-dependent reduction of N-acetyl-5-glutamyl phosphate to yield N-acetyl-L-glutamate 5-semialdehyde. The sequence is that of N-acetyl-gamma-glutamyl-phosphate reductase from Methanocorpusculum labreanum (strain ATCC 43576 / DSM 4855 / Z).